Here is a 371-residue protein sequence, read N- to C-terminus: tRNA-specific 2-thiouridylase MnmA (371 aa).

ATP is bound by residues 13–20 (GMSGGVDS) and methionine 39. The interval 99-101 (NPD) is interaction with target base in tRNA. Cysteine 104 serves as the catalytic Nucleophile. Cysteine 104 and cysteine 200 are oxidised to a cystine. Glycine 128 is a binding site for ATP. An interaction with tRNA region spans residues 150–152 (KDQ). The active-site Cysteine persulfide intermediate is the cysteine 200. An interaction with tRNA region spans residues 309–310 (RY).

The protein belongs to the MnmA/TRMU family.

It localises to the cytoplasm. The catalysed reaction is S-sulfanyl-L-cysteinyl-[protein] + uridine(34) in tRNA + AH2 + ATP = 2-thiouridine(34) in tRNA + L-cysteinyl-[protein] + A + AMP + diphosphate + H(+). Catalyzes the 2-thiolation of uridine at the wobble position (U34) of tRNA, leading to the formation of s(2)U34. In Bacillus velezensis (strain DSM 23117 / BGSC 10A6 / LMG 26770 / FZB42) (Bacillus amyloliquefaciens subsp. plantarum), this protein is tRNA-specific 2-thiouridylase MnmA.